Here is a 52-residue protein sequence, read N- to C-terminus: NADH dehydrogenase [ubiquinone] 1 alpha subcomplex subunit 4 homolog (52 aa).

Residues 14–30 traverse the membrane as a helical segment; it reads LYPLGAAVATAVGFATY.

The protein belongs to the complex I NDUFA4 subunit family.

The protein resides in the mitochondrion inner membrane. In terms of biological role, accessory subunit of the mitochondrial membrane respiratory chain NADH dehydrogenase (Complex I), that is believed to be not involved in catalysis. Complex I functions in the transfer of electrons from NADH to the respiratory chain. The immediate electron acceptor for the enzyme is believed to be ubiquinone. The chain is NADH dehydrogenase [ubiquinone] 1 alpha subcomplex subunit 4 homolog from Schizosaccharomyces pombe (strain 972 / ATCC 24843) (Fission yeast).